The following is a 618-amino-acid chain: Dihydroxy-acid dehydratase (618 aa).

Aspartate 81 is a binding site for Mg(2+). Cysteine 122 serves as a coordination point for [2Fe-2S] cluster. Mg(2+)-binding residues include aspartate 123 and lysine 124. Lysine 124 carries the post-translational modification N6-carboxylysine. Residue cysteine 195 participates in [2Fe-2S] cluster binding. Glutamate 490 contributes to the Mg(2+) binding site. The Proton acceptor role is filled by serine 516.

It belongs to the IlvD/Edd family. Homodimer. It depends on [2Fe-2S] cluster as a cofactor. Requires Mg(2+) as cofactor.

It carries out the reaction (2R)-2,3-dihydroxy-3-methylbutanoate = 3-methyl-2-oxobutanoate + H2O. The catalysed reaction is (2R,3R)-2,3-dihydroxy-3-methylpentanoate = (S)-3-methyl-2-oxopentanoate + H2O. The protein operates within amino-acid biosynthesis; L-isoleucine biosynthesis; L-isoleucine from 2-oxobutanoate: step 3/4. It participates in amino-acid biosynthesis; L-valine biosynthesis; L-valine from pyruvate: step 3/4. Functionally, functions in the biosynthesis of branched-chain amino acids. Catalyzes the dehydration of (2R,3R)-2,3-dihydroxy-3-methylpentanoate (2,3-dihydroxy-3-methylvalerate) into 2-oxo-3-methylpentanoate (2-oxo-3-methylvalerate) and of (2R)-2,3-dihydroxy-3-methylbutanoate (2,3-dihydroxyisovalerate) into 2-oxo-3-methylbutanoate (2-oxoisovalerate), the penultimate precursor to L-isoleucine and L-valine, respectively. This Gluconobacter oxydans (strain 621H) (Gluconobacter suboxydans) protein is Dihydroxy-acid dehydratase.